The primary structure comprises 245 residues: Biosynthetic peptidoglycan transglycosylase (245 aa).

A helical membrane pass occupies residues 20–42 (VYAGSVFAGAWLATQLFYLAQIA).

Belongs to the glycosyltransferase 51 family.

It is found in the cell inner membrane. The enzyme catalyses [GlcNAc-(1-&gt;4)-Mur2Ac(oyl-L-Ala-gamma-D-Glu-L-Lys-D-Ala-D-Ala)](n)-di-trans,octa-cis-undecaprenyl diphosphate + beta-D-GlcNAc-(1-&gt;4)-Mur2Ac(oyl-L-Ala-gamma-D-Glu-L-Lys-D-Ala-D-Ala)-di-trans,octa-cis-undecaprenyl diphosphate = [GlcNAc-(1-&gt;4)-Mur2Ac(oyl-L-Ala-gamma-D-Glu-L-Lys-D-Ala-D-Ala)](n+1)-di-trans,octa-cis-undecaprenyl diphosphate + di-trans,octa-cis-undecaprenyl diphosphate + H(+). It participates in cell wall biogenesis; peptidoglycan biosynthesis. In terms of biological role, peptidoglycan polymerase that catalyzes glycan chain elongation from lipid-linked precursors. This is Biosynthetic peptidoglycan transglycosylase from Burkholderia lata (strain ATCC 17760 / DSM 23089 / LMG 22485 / NCIMB 9086 / R18194 / 383).